Reading from the N-terminus, the 484-residue chain is Glycogen synthase (484 aa).

Lys-15 contacts ADP-alpha-D-glucose.

It belongs to the glycosyltransferase 1 family. Bacterial/plant glycogen synthase subfamily.

It carries out the reaction [(1-&gt;4)-alpha-D-glucosyl](n) + ADP-alpha-D-glucose = [(1-&gt;4)-alpha-D-glucosyl](n+1) + ADP + H(+). Its pathway is glycan biosynthesis; glycogen biosynthesis. Synthesizes alpha-1,4-glucan chains using ADP-glucose. This Geotalea uraniireducens (strain Rf4) (Geobacter uraniireducens) protein is Glycogen synthase.